We begin with the raw amino-acid sequence, 462 residues long: Arginine biosynthesis bifunctional protein ArgJ, mitochondrial (462 aa).

Substrate contacts are provided by Thr-200, Lys-228, Thr-239, Glu-326, Asn-457, and Thr-462. Residue Thr-239 is the Nucleophile of the active site.

The protein belongs to the ArgJ family. As to quaternary structure, heterodimer of an alpha and a beta chain. The alpha and beta chains are autoproteolytically processed from a single precursor protein within the mitochondrion.

Its subcellular location is the mitochondrion matrix. The enzyme catalyses N(2)-acetyl-L-ornithine + L-glutamate = N-acetyl-L-glutamate + L-ornithine. It catalyses the reaction L-glutamate + acetyl-CoA = N-acetyl-L-glutamate + CoA + H(+). Its pathway is amino-acid biosynthesis; L-arginine biosynthesis; L-ornithine and N-acetyl-L-glutamate from L-glutamate and N(2)-acetyl-L-ornithine (cyclic): step 1/1. It functions in the pathway amino-acid biosynthesis; L-arginine biosynthesis; N(2)-acetyl-L-ornithine from L-glutamate: step 1/4. Functionally, catalyzes two activities which are involved in the cyclic version of arginine biosynthesis: the synthesis of acetylglutamate from glutamate and acetyl-CoA, and of ornithine by transacetylation between acetylornithine and glutamate. In Pyrenophora tritici-repentis (strain Pt-1C-BFP) (Wheat tan spot fungus), this protein is Arginine biosynthesis bifunctional protein ArgJ, mitochondrial.